The following is a 465-amino-acid chain: Ribulose bisphosphate carboxylase large chain (465 aa).

Lys-4 carries the N6,N6,N6-trimethyllysine modification. Residues Asn-113 and Thr-163 each contribute to the substrate site. Residue Lys-165 is the Proton acceptor of the active site. Substrate is bound at residue Lys-167. The Mg(2+) site is built by Lys-191, Asp-193, and Glu-194. Lys-191 carries the N6-carboxylysine modification. His-284 (proton acceptor) is an active-site residue. Substrate is bound by residues Arg-285, His-317, and Ser-369.

The protein belongs to the RuBisCO large chain family. Type I subfamily. As to quaternary structure, heterohexadecamer of 8 large chains and 8 small chains; disulfide-linked. The disulfide link is formed within the large subunit homodimers. It depends on Mg(2+) as a cofactor. In terms of processing, the disulfide bond which can form in the large chain dimeric partners within the hexadecamer appears to be associated with oxidative stress and protein turnover.

Its subcellular location is the plastid. The protein localises to the chloroplast. It carries out the reaction 2 (2R)-3-phosphoglycerate + 2 H(+) = D-ribulose 1,5-bisphosphate + CO2 + H2O. The catalysed reaction is D-ribulose 1,5-bisphosphate + O2 = 2-phosphoglycolate + (2R)-3-phosphoglycerate + 2 H(+). In terms of biological role, ruBisCO catalyzes two reactions: the carboxylation of D-ribulose 1,5-bisphosphate, the primary event in carbon dioxide fixation, as well as the oxidative fragmentation of the pentose substrate in the photorespiration process. Both reactions occur simultaneously and in competition at the same active site. The protein is Ribulose bisphosphate carboxylase large chain of Humiria balsamifera (Tauroniro).